The chain runs to 699 residues: MKQHIFLVEIGTEELPAKELRRLAQYFTANFINELNANGINYNDINWFAAPRRLAIKVNSINSIPTKSYMEKRGPAINKAFDAEGKPTPAAIGWARNCGITVNQAERFTTDKGEWLIYRMLVETKPVQKLLCSMVYNALTKFSSLTKIMRWGEKNYKFIRPVRTITLLLDDLVIPGNIFGIDSNRIILGHRFMGESVISLLHADYYPNVLLERGRVIADYELRKDTIRRNIEIMVKKIGGFTKINDKLLEEVTSLVDWPIVLTASFNANFLRIPAEALIYTMENNQKYFPVYDAKGKLLPYFIFVTNIESTNTNQIVVGNEKVMRSRLADVEFFFNIDRKQKLEDYLLLLGQVKFQMELGTLLDKSYRLEILASWIAEIISTDIKQAARAALISKCDLMTQMVFEYPEIQGIIGMHYATLDGETELVALAQKEQYLPLFSGDNLPTTLVSCAVSIADKMDNLAGIFGINQQYTKQANDPLALRRAALGILRIIIEKQLPIDLLSLIDKAVFLYNKKLTNTIVVEQIIHFMLNRLLSWYKKQGYSIDTINAVMAVYKPTGKLIHFDARLRAVHYLRQIPHAENLTKRIFNIIAKHKDLINGEVNFTLLKQPEEVILINSITQLHKKLILFFEKGKYQEALWELINLREIINTFFSKIIIMTENKELCINRLNIINKVRQLFLIIADFSLLQCSKEKSNVD.

It belongs to the class-II aminoacyl-tRNA synthetase family. Tetramer of two alpha and two beta subunits.

It localises to the cytoplasm. The enzyme catalyses tRNA(Gly) + glycine + ATP = glycyl-tRNA(Gly) + AMP + diphosphate. The polypeptide is Glycine--tRNA ligase beta subunit (Baumannia cicadellinicola subsp. Homalodisca coagulata).